We begin with the raw amino-acid sequence, 1560 residues long: uncharacterized protein (1560 aa).

The interval 1-46 (MEEIENAHYQNLENFNDETSEDVNDTSDDINKNNDDNNKYDDNNVN) is disordered. Residues 15-28 (FNDETSEDVNDTSD) are compositionally biased toward acidic residues. Over residues 29–46 (DINKNNDDNNKYDDNNVN) the composition is skewed to basic and acidic residues. Coiled coils occupy residues 36 to 60 (DNNKYDDNNVNVLDDKNKLENEEDN) and 317 to 359 (KKNN…NNNN). Residues 568–594 (KKKKKKNDHHERDSDNNNNDSNNNNYY) form a disordered region. The segment covering 583–594 (NNNNDSNNNNYY) has biased composition (low complexity). Residues 1188-1239 (DTTNNILNKQNESLDNLKKNMYLSKNNYDNQLSSYKNTKQNKTNINEKYNNN) adopt a coiled-coil conformation. The next 2 helical transmembrane spans lie at 1271–1291 (LYISSMLYINIYLCQIFFILL) and 1314–1334 (LDYFYLLILLNFYSLFYILIS).

Its subcellular location is the membrane. This is an uncharacterized protein from Plasmodium falciparum (isolate 3D7).